We begin with the raw amino-acid sequence, 338 residues long: MSLREWLIAIGTLVIIGIVIDGVRRMRRARKESMAISSGMGADELKDSPLDDDFNPELPNGGARTVSRSTLEDRGYLKRDMSAPVSTDQEDDVTPESGWSARDDDEDDGILSPPRVVKPETEESEPVEPEAVKTPATEVDRSKTRPSVPEKAKAEPEPRAEEPPVVTTEVEEDTARRTPNKPRKNQPLAGANRPEAREVLVINVLARSGEQFQGSKLKSLFEACGLEQGDMDIYHRHESEDTTTPVQFSVANAVEPGTFRPQDMAGLSTPGISFFMSLPGPTNALQAFEFMLETAQCVVRNLGGELKDERRSVMTPQTIEHCRQRIREFERKQRSQRA.

The Periplasmic portion of the chain corresponds to 1 to 2 (MS). The chain crosses the membrane as a helical span at residues 3-23 (LREWLIAIGTLVIIGIVIDGV). Topologically, residues 24 to 338 (RRMRRARKES…FERKQRSQRA (315 aa)) are cytoplasmic. Residues 33–192 (SMAISSGMGA…RKNQPLAGAN (160 aa)) are disordered. Composition is skewed to basic and acidic residues over residues 70-81 (TLEDRGYLKRDM) and 138-162 (EVDR…RAEE).

This sequence belongs to the ZipA family. As to quaternary structure, interacts with FtsZ via their C-terminal domains.

The protein localises to the cell inner membrane. Functionally, essential cell division protein that stabilizes the FtsZ protofilaments by cross-linking them and that serves as a cytoplasmic membrane anchor for the Z ring. Also required for the recruitment to the septal ring of downstream cell division proteins. This is Cell division protein ZipA from Marinobacter nauticus (strain ATCC 700491 / DSM 11845 / VT8) (Marinobacter aquaeolei).